Consider the following 213-residue polypeptide: Orotate phosphoribosyltransferase (213 aa).

Lys26 lines the 5-phospho-alpha-D-ribose 1-diphosphate pocket. An orotate-binding site is contributed by 34 to 35 (FF). 5-phospho-alpha-D-ribose 1-diphosphate contacts are provided by residues 72-73 (YK), Arg99, Lys100, Lys103, His105, and 124-132 (DDVITAGTA). Positions 128 and 156 each coordinate orotate.

Belongs to the purine/pyrimidine phosphoribosyltransferase family. PyrE subfamily. Homodimer. It depends on Mg(2+) as a cofactor.

The catalysed reaction is orotidine 5'-phosphate + diphosphate = orotate + 5-phospho-alpha-D-ribose 1-diphosphate. It participates in pyrimidine metabolism; UMP biosynthesis via de novo pathway; UMP from orotate: step 1/2. Functionally, catalyzes the transfer of a ribosyl phosphate group from 5-phosphoribose 1-diphosphate to orotate, leading to the formation of orotidine monophosphate (OMP). In Escherichia coli O45:K1 (strain S88 / ExPEC), this protein is Orotate phosphoribosyltransferase.